Consider the following 435-residue polypeptide: GTPase Der (435 aa).

EngA-type G domains lie at 3 to 168 (PLVA…PDET) and 176 to 351 (IKLA…QNRQ). GTP is bound by residues 9-16 (GRPNVGKS), 56-60 (DTGGY), 120-123 (NKVE), 182-189 (GRPNVGKS), 229-233 (DTAGL), and 294-297 (NKWD). A KH-like domain is found at 352–435 (KKISTSELNR…VPVSFRYRKK (84 aa)).

It belongs to the TRAFAC class TrmE-Era-EngA-EngB-Septin-like GTPase superfamily. EngA (Der) GTPase family. Associates with the 50S ribosomal subunit.

Functionally, GTPase that plays an essential role in the late steps of ribosome biogenesis. This is GTPase Der from Chlorobium phaeobacteroides (strain BS1).